Reading from the N-terminus, the 190-residue chain is UPF0725 protein At2g20625 (190 aa).

Belongs to the UPF0725 (EMB2204) family.

In Arabidopsis thaliana (Mouse-ear cress), this protein is UPF0725 protein At2g20625.